A 504-amino-acid polypeptide reads, in one-letter code: Cytochrome P450 6B7 (504 aa).

C445 serves as a coordination point for heme.

The protein belongs to the cytochrome P450 family. Heme is required as a cofactor.

It localises to the endoplasmic reticulum membrane. The protein resides in the microsome membrane. It catalyses the reaction an organic molecule + reduced [NADPH--hemoprotein reductase] + O2 = an alcohol + oxidized [NADPH--hemoprotein reductase] + H2O + H(+). This is Cytochrome P450 6B7 (CYP6B7) from Helicoverpa armigera (Cotton bollworm).